Reading from the N-terminus, the 848-residue chain is Leucine--tRNA ligase (848 aa).

The tract at residues 1 to 21 is disordered; sequence MTENTPGTSAPERFDPATADT. Positions 51-61 match the 'HIGH' region motif; sequence PYPSGRIHIGH. A 'KMSKS' region motif is present at residues 625–629; it reads KMSKS. Position 628 (Lys628) interacts with ATP.

The protein belongs to the class-I aminoacyl-tRNA synthetase family.

The protein resides in the cytoplasm. The enzyme catalyses tRNA(Leu) + L-leucine + ATP = L-leucyl-tRNA(Leu) + AMP + diphosphate. The polypeptide is Leucine--tRNA ligase (Novosphingobium aromaticivorans (strain ATCC 700278 / DSM 12444 / CCUG 56034 / CIP 105152 / NBRC 16084 / F199)).